The sequence spans 84 residues: MKIAIVMTLLLVAFSTASFAIEPIERAALDLVMARADSGGDAGGDAGADDEGSCKWMFQSCEPPAKCCDGWTCYKGRCNLILGR.

The first 20 residues, 1–20, serve as a signal peptide directing secretion; sequence MKIAIVMTLLLVAFSTASFA. Positions 21 to 35 are excised as a propeptide; sequence IEPIERAALDLVMAR. Disulfide bonds link cysteine 54–cysteine 68, cysteine 61–cysteine 73, and cysteine 67–cysteine 78. Leucine 82 carries the leucine amide modification.

In terms of tissue distribution, expressed by the venom gland.

The protein localises to the secreted. Its function is as follows. Weakly nhibits voltage-gated sodium channels Nav1.7/SCN9A. High concentration of the toxin (3 uM) inhibits Nav1.7/SCN9A currents by 79%. The protein is Mu-Sparatoxin-Hp1 of Heteropoda pingtungensis (Pingtung huntsman spider).